Consider the following 76-residue polypeptide: Probable small nuclear ribonucleoprotein G (76 aa).

Residues 4–76 enclose the Sm domain; sequence AHPPEVKKYM…IVMVEALDRV (73 aa).

Belongs to the snRNP Sm proteins family. Interacts with the SMN complex. Core component of the spliceosomal U1, U2, U4 and U5 small nuclear ribonucleoproteins (snRNPs), the building blocks of the spliceosome. Most spliceosomal snRNPs contain a common set of Sm proteins, SNRPB, SNRPD1, SNRPD2, SNRPD3, SNRPE, SNRPF and SNRPG that assemble in a heptameric protein ring on the Sm site of the small nuclear RNA to form the core snRNP. Component of the U1 snRNP. Component of the U4/U6-U5 tri-snRNP complex. Component of the U7 snRNP complex. Component of the U11/U12 snRNPs that are part of the U12-type spliceosome.

The protein localises to the cytoplasm. It localises to the cytosol. The protein resides in the nucleus. In terms of biological role, plays a role in pre-mRNA splicing as a core component of the spliceosomal U1, U2, U4 and U5 small nuclear ribonucleoproteins (snRNPs), the building blocks of the spliceosome. Component of both the pre-catalytic spliceosome B complex and activated spliceosome C complexes. Is also a component of the minor U12 spliceosome. The sequence is that of Probable small nuclear ribonucleoprotein G from Drosophila melanogaster (Fruit fly).